The following is a 316-amino-acid chain: Methionyl-tRNA formyltransferase (316 aa).

Gly111–Pro114 lines the (6S)-5,6,7,8-tetrahydrofolate pocket.

It belongs to the Fmt family.

The catalysed reaction is L-methionyl-tRNA(fMet) + (6R)-10-formyltetrahydrofolate = N-formyl-L-methionyl-tRNA(fMet) + (6S)-5,6,7,8-tetrahydrofolate + H(+). Attaches a formyl group to the free amino group of methionyl-tRNA(fMet). The formyl group appears to play a dual role in the initiator identity of N-formylmethionyl-tRNA by promoting its recognition by IF2 and preventing the misappropriation of this tRNA by the elongation apparatus. The sequence is that of Methionyl-tRNA formyltransferase from Chlamydia trachomatis serovar L2b (strain UCH-1/proctitis).